Consider the following 237-residue polypeptide: tRNA (guanine-N(7)-)-methyltransferase (237 aa).

Glu68, Glu93, Asp120, and Asp143 together coordinate S-adenosyl-L-methionine. Asp143 is an active-site residue. Substrate-binding positions include Lys147, Asp179, and Thr216–Glu219.

The protein belongs to the class I-like SAM-binding methyltransferase superfamily. TrmB family.

It carries out the reaction guanosine(46) in tRNA + S-adenosyl-L-methionine = N(7)-methylguanosine(46) in tRNA + S-adenosyl-L-homocysteine. Its pathway is tRNA modification; N(7)-methylguanine-tRNA biosynthesis. In terms of biological role, catalyzes the formation of N(7)-methylguanine at position 46 (m7G46) in tRNA. In Shewanella piezotolerans (strain WP3 / JCM 13877), this protein is tRNA (guanine-N(7)-)-methyltransferase.